A 353-amino-acid chain; its full sequence is Photosystem II protein D1 (353 aa).

Thr-2 is subject to N-acetylthreonine. At Thr-2 the chain carries Phosphothreonine. A run of 3 helical transmembrane segments spans residues 29–46, 118–133, and 142–156; these read NIGW…TATS, HFLL…EWEL, and WIAV…AATA. His-118 contacts chlorophyll a. Pheophytin a is bound at residue Tyr-126. The [CaMn4O5] cluster site is built by Asp-170 and Glu-189. Residues 197–218 form a helical membrane-spanning segment; sequence FHMLGVAGVFGGSLFSAMHGSL. A chlorophyll a-binding site is contributed by His-198. A quinone contacts are provided by residues His-215 and 264–265; that span reads SF. His-215 serves as a coordination point for Fe cation. His-272 provides a ligand contact to Fe cation. A helical membrane pass occupies residues 274–288; the sequence is FLAAWPVVGIWFTAL. His-332, Glu-333, Asp-342, and Ala-344 together coordinate [CaMn4O5] cluster. A propeptide spanning residues 345-353 is cleaved from the precursor; it reads AVEAPAVNG.

It belongs to the reaction center PufL/M/PsbA/D family. In terms of assembly, PSII is composed of 1 copy each of membrane proteins PsbA, PsbB, PsbC, PsbD, PsbE, PsbF, PsbH, PsbI, PsbJ, PsbK, PsbL, PsbM, PsbT, PsbX, PsbY, PsbZ, Psb30/Ycf12, at least 3 peripheral proteins of the oxygen-evolving complex and a large number of cofactors. It forms dimeric complexes. The D1/D2 heterodimer binds P680, chlorophylls that are the primary electron donor of PSII, and subsequent electron acceptors. It shares a non-heme iron and each subunit binds pheophytin, quinone, additional chlorophylls, carotenoids and lipids. D1 provides most of the ligands for the Mn4-Ca-O5 cluster of the oxygen-evolving complex (OEC). There is also a Cl(-1) ion associated with D1 and D2, which is required for oxygen evolution. The PSII complex binds additional chlorophylls, carotenoids and specific lipids. is required as a cofactor. Post-translationally, tyr-161 forms a radical intermediate that is referred to as redox-active TyrZ, YZ or Y-Z. C-terminally processed by CTPA; processing is essential to allow assembly of the oxygen-evolving complex and thus photosynthetic growth.

The protein resides in the plastid. Its subcellular location is the chloroplast thylakoid membrane. It carries out the reaction 2 a plastoquinone + 4 hnu + 2 H2O = 2 a plastoquinol + O2. Photosystem II (PSII) is a light-driven water:plastoquinone oxidoreductase that uses light energy to abstract electrons from H(2)O, generating O(2) and a proton gradient subsequently used for ATP formation. It consists of a core antenna complex that captures photons, and an electron transfer chain that converts photonic excitation into a charge separation. The D1/D2 (PsbA/PsbD) reaction center heterodimer binds P680, the primary electron donor of PSII as well as several subsequent electron acceptors. The sequence is that of Photosystem II protein D1 from Dumortiera hirsuta (Liverwort).